The chain runs to 358 residues: Photosystem II protein D1 2 (358 aa).

3 helical membrane passes run 28–45 (YVGW…AATI), 117–132 (HFLI…QWEL), and 141–155 (WICV…AAMV). A chlorophyll a-binding site is contributed by His117. Tyr125 is a binding site for pheophytin a. 2 residues coordinate [CaMn4O5] cluster: Asp169 and Glu188. Residues 196-217 (FHMLGVAGVFGGSLFSAMHGSL) traverse the membrane as a helical segment. Residue His197 participates in chlorophyll a binding. A quinone contacts are provided by residues His214 and 263 to 264 (SF). Residue His214 participates in Fe cation binding. His271 provides a ligand contact to Fe cation. A helical transmembrane segment spans residues 273–287 (FLAAWPVVGIWFTSM). [CaMn4O5] cluster is bound by residues His331, Glu332, Asp341, and Ala343. A propeptide spanning residues 344–358 (TTESAPVALQAPAVG) is cleaved from the precursor.

Belongs to the reaction center PufL/M/PsbA/D family. PSII is composed of 1 copy each of membrane proteins PsbA, PsbB, PsbC, PsbD, PsbE, PsbF, PsbH, PsbI, PsbJ, PsbK, PsbL, PsbM, PsbT, PsbX, PsbY, PsbZ, Psb30/Ycf12, peripheral proteins PsbO, CyanoQ (PsbQ), PsbU, PsbV and a large number of cofactors. It forms dimeric complexes. It depends on The D1/D2 heterodimer binds P680, chlorophylls that are the primary electron donor of PSII, and subsequent electron acceptors. It shares a non-heme iron and each subunit binds pheophytin, quinone, additional chlorophylls, carotenoids and lipids. D1 provides most of the ligands for the Mn4-Ca-O5 cluster of the oxygen-evolving complex (OEC). There is also a Cl(-1) ion associated with D1 and D2, which is required for oxygen evolution. The PSII complex binds additional chlorophylls, carotenoids and specific lipids. as a cofactor. Tyr-160 forms a radical intermediate that is referred to as redox-active TyrZ, YZ or Y-Z. In terms of processing, C-terminally processed by CtpA; processing is essential to allow assembly of the oxygen-evolving complex and thus photosynthetic growth.

Its subcellular location is the cellular thylakoid membrane. It catalyses the reaction 2 a plastoquinone + 4 hnu + 2 H2O = 2 a plastoquinol + O2. In terms of biological role, photosystem II (PSII) is a light-driven water:plastoquinone oxidoreductase that uses light energy to abstract electrons from H(2)O, generating O(2) and a proton gradient subsequently used for ATP formation. It consists of a core antenna complex that captures photons, and an electron transfer chain that converts photonic excitation into a charge separation. The D1/D2 (PsbA/PsbD) reaction center heterodimer binds P680, the primary electron donor of PSII as well as several subsequent electron acceptors. The sequence is that of Photosystem II protein D1 2 from Synechococcus sp. (strain RCC307).